Here is a 231-residue protein sequence, read N- to C-terminus: Ribose-5-phosphate isomerase A (231 aa).

Substrate-binding positions include 32 to 35 (TGST), 85 to 88 (DGAD), and 98 to 101 (KGGG). Residue E107 is the Proton acceptor of the active site. K125 is a binding site for substrate.

Belongs to the ribose 5-phosphate isomerase family. As to quaternary structure, homodimer.

It catalyses the reaction aldehydo-D-ribose 5-phosphate = D-ribulose 5-phosphate. The protein operates within carbohydrate degradation; pentose phosphate pathway; D-ribose 5-phosphate from D-ribulose 5-phosphate (non-oxidative stage): step 1/1. Catalyzes the reversible conversion of ribose-5-phosphate to ribulose 5-phosphate. In Burkholderia orbicola (strain MC0-3), this protein is Ribose-5-phosphate isomerase A.